A 613-amino-acid chain; its full sequence is ATP-dependent zinc metalloprotease FtsH (613 aa).

Topologically, residues 1–4 (MVKN) are cytoplasmic. The helical transmembrane segment at 5–25 (LIFWLVITVVLMSVFQNFNSS) threads the bilayer. The Extracellular portion of the chain corresponds to 26–98 (DTSNHRVDYS…VGEIPEEPSL (73 aa)). Residues 99 to 119 (LISIFISWFPMLLLIGVWIFF) traverse the membrane as a helical segment. Topologically, residues 120–613 (MRQMQMGGGK…WLEVDQKKDI (494 aa)) are cytoplasmic. ATP is bound at residue 192–199 (GPPGTGKT). Residue His-414 participates in Zn(2+) binding. Glu-415 is an active-site residue. Zn(2+) contacts are provided by His-418 and Asp-492.

In the central section; belongs to the AAA ATPase family. This sequence in the C-terminal section; belongs to the peptidase M41 family. In terms of assembly, homohexamer. The cofactor is Zn(2+).

The protein localises to the cell membrane. In terms of biological role, acts as a processive, ATP-dependent zinc metallopeptidase for both cytoplasmic and membrane proteins. Plays a role in the quality control of integral membrane proteins. The chain is ATP-dependent zinc metalloprotease FtsH from Buchnera aphidicola subsp. Schizaphis graminum (strain Sg).